A 183-amino-acid polypeptide reads, in one-letter code: Calcineurin subunit B type 2 (183 aa).

Gly2 carries N-myristoyl glycine lipidation. EF-hand domains lie at 25–60 (REIK…SMNP), 64–92 (RIIS…FHPK), 94–129 (DKAD…MVGS), and 135–170 (QISS…SGCN). 4 residues coordinate Ca(2+): Asp107, Asn109, Asp111, and Glu118.

This sequence belongs to the calcineurin regulatory subunit family. As to quaternary structure, calcineurin is composed of a catalytic subunit (A) and a regulatory subunit (B).

In terms of biological role, regulatory subunit of calcineurin, a calcium-dependent, calmodulin stimulated protein phosphatase. Confers calcium sensitivity. This Dictyostelium discoideum (Social amoeba) protein is Calcineurin subunit B type 2 (cnbB).